A 434-amino-acid polypeptide reads, in one-letter code: MKLFGLFLSFTLLFLCPFISQADVPELSRQPPRPIVFVHNDRSKSDPQQVHISLAGKDHMRVTFITEDNKVESVVEYGKQPGKYDGKATGECTSYKYFFYKSGKIHHVKIGPLQANTTYYYRCGGNGPEFSFKTPPSTFPVEFAIVGDLGQTEWTAATLSHINSQDYDVFLLPGDLSYADTHQPLWDSFGRLVEPLASKRPWMVTEGNHEIEFFPIIEHTTFKSYNARWLMPHTESFSTSNLYYSFDVAGVHTVMLGSYTDFDCESDQYQWLQADLAKVDRKTTPWVVVLLHAPWYNTNEAHEGEGESMREAMESLLFNARVDVVFSGHVHAYERFKRVYNNKADPCGPIHITIGDGGNREGLALSFKKPPSPLSEFRESSFGHGRLKVMDGKRAHWSWHRNNDSNSLLADEVWLDSLSTSSSCWPSSRSNDEL.

The N-terminal stretch at 1-22 (MKLFGLFLSFTLLFLCPFISQA) is a signal peptide. Asn-116 is a glycosylation site (N-linked (GlcNAc...) asparagine). The Fe cation site is built by Asp-148, Asp-175, and Tyr-178. Asp-175 serves as a coordination point for Zn(2+). Asn-208 and His-292 together coordinate Zn(2+). Asn-208 contributes to the substrate binding site. The Proton donor role is filled by His-302. Zn(2+) is bound at residue His-329. 329–331 (HVH) contributes to the substrate binding site. A Fe cation-binding site is contributed by His-331. N-linked (GlcNAc...) asparagine glycosylation is present at Asn-403.

Belongs to the metallophosphoesterase superfamily. Purple acid phosphatase family. As to quaternary structure, homodimer. Requires Fe cation as cofactor. The cofactor is Zn(2+). Expressed in roots, stems, leaves, flowers and siliques.

Its subcellular location is the secreted. It carries out the reaction a phosphate monoester + H2O = an alcohol + phosphate. This Arabidopsis thaliana (Mouse-ear cress) protein is Purple acid phosphatase 22 (PAP22).